The chain runs to 121 residues: Ribonuclease P protein component (121 aa).

It belongs to the RnpA family. As to quaternary structure, consists of a catalytic RNA component (M1 or rnpB) and a protein subunit.

It catalyses the reaction Endonucleolytic cleavage of RNA, removing 5'-extranucleotides from tRNA precursor.. Its function is as follows. RNaseP catalyzes the removal of the 5'-leader sequence from pre-tRNA to produce the mature 5'-terminus. It can also cleave other RNA substrates such as 4.5S RNA. The protein component plays an auxiliary but essential role in vivo by binding to the 5'-leader sequence and broadening the substrate specificity of the ribozyme. The chain is Ribonuclease P protein component from Chromobacterium violaceum (strain ATCC 12472 / DSM 30191 / JCM 1249 / CCUG 213 / NBRC 12614 / NCIMB 9131 / NCTC 9757 / MK).